The primary structure comprises 461 residues: Argininosuccinate lyase (461 aa).

The protein belongs to the lyase 1 family. Argininosuccinate lyase subfamily. Homotetramer.

Its subcellular location is the cytoplasm. The catalysed reaction is 2-(N(omega)-L-arginino)succinate = fumarate + L-arginine. It participates in amino-acid biosynthesis; L-arginine biosynthesis; L-arginine from L-ornithine and carbamoyl phosphate: step 3/3. The protein is Argininosuccinate lyase of Nostoc punctiforme (strain ATCC 29133 / PCC 73102).